Reading from the N-terminus, the 316-residue chain is 2-phospho-L-lactate guanylyltransferase (316 aa).

Positions 72–85 are enriched in low complexity; the sequence is TGVSTEAVSTSTST. 2 disordered regions span residues 72 to 107 and 119 to 138; these read TGVSTEAVSTSTSTHADTTEHNAASDNYVSQSPTHT and LRDDDDPDNEASTQERDGDK. Residues 92–107 show a composition bias toward polar residues; that stretch reads HNAASDNYVSQSPTHT.

It belongs to the CofC family. As to quaternary structure, homodimer.

The enzyme catalyses (2S)-2-phospholactate + GTP + H(+) = (2S)-lactyl-2-diphospho-5'-guanosine + diphosphate. Its pathway is cofactor biosynthesis; coenzyme F420 biosynthesis. In terms of biological role, guanylyltransferase that catalyzes the activation of (2S)-2-phospholactate (2-PL) as (2S)-lactyl-2-diphospho-5'-guanosine, via the condensation of 2-PL with GTP. It is involved in the biosynthesis of coenzyme F420, a hydride carrier cofactor. The chain is 2-phospho-L-lactate guanylyltransferase from Haloquadratum walsbyi (strain DSM 16790 / HBSQ001).